The chain runs to 120 residues: UPF0295 protein Exig_0660 (120 aa).

The next 2 membrane-spanning stretches (helical) occupy residues 16–36 (AMFL…LKQF) and 41–61 (VILM…YFLI).

Belongs to the UPF0295 family.

It localises to the cell membrane. This is UPF0295 protein Exig_0660 from Exiguobacterium sibiricum (strain DSM 17290 / CCUG 55495 / CIP 109462 / JCM 13490 / 255-15).